The primary structure comprises 413 residues: Arginine biosynthesis bifunctional protein ArgJ (413 aa).

6 residues coordinate substrate: threonine 163, lysine 189, threonine 200, glutamate 286, asparagine 408, and threonine 413. The Nucleophile role is filled by threonine 200.

Belongs to the ArgJ family. As to quaternary structure, heterotetramer of two alpha and two beta chains.

It is found in the cytoplasm. It catalyses the reaction N(2)-acetyl-L-ornithine + L-glutamate = N-acetyl-L-glutamate + L-ornithine. It carries out the reaction L-glutamate + acetyl-CoA = N-acetyl-L-glutamate + CoA + H(+). Its pathway is amino-acid biosynthesis; L-arginine biosynthesis; L-ornithine and N-acetyl-L-glutamate from L-glutamate and N(2)-acetyl-L-ornithine (cyclic): step 1/1. The protein operates within amino-acid biosynthesis; L-arginine biosynthesis; N(2)-acetyl-L-ornithine from L-glutamate: step 1/4. In terms of biological role, catalyzes two activities which are involved in the cyclic version of arginine biosynthesis: the synthesis of N-acetylglutamate from glutamate and acetyl-CoA as the acetyl donor, and of ornithine by transacetylation between N(2)-acetylornithine and glutamate. This chain is Arginine biosynthesis bifunctional protein ArgJ, found in Staphylococcus aureus (strain COL).